The sequence spans 70 residues: Large ribosomal subunit protein bL32 (70 aa).

The segment covering 1-19 (MAVPKKKTSPSRRGMRRSH) has biased composition (basic residues). The tract at residues 1–21 (MAVPKKKTSPSRRGMRRSHQA) is disordered.

Belongs to the bacterial ribosomal protein bL32 family.

The sequence is that of Large ribosomal subunit protein bL32 from Granulibacter bethesdensis (strain ATCC BAA-1260 / CGDNIH1).